Reading from the N-terminus, the 270-residue chain is Formamidopyrimidine-DNA glycosylase (270 aa).

The Schiff-base intermediate with DNA role is filled by P2. E3 (proton donor) is an active-site residue. K58 acts as the Proton donor; for beta-elimination activity in catalysis. The DNA site is built by H91, R110, and R151. The segment at R236–R270 adopts an FPG-type zinc-finger fold. R260 acts as the Proton donor; for delta-elimination activity in catalysis.

This sequence belongs to the FPG family. In terms of assembly, monomer. It depends on Zn(2+) as a cofactor.

It carries out the reaction Hydrolysis of DNA containing ring-opened 7-methylguanine residues, releasing 2,6-diamino-4-hydroxy-5-(N-methyl)formamidopyrimidine.. The enzyme catalyses 2'-deoxyribonucleotide-(2'-deoxyribose 5'-phosphate)-2'-deoxyribonucleotide-DNA = a 3'-end 2'-deoxyribonucleotide-(2,3-dehydro-2,3-deoxyribose 5'-phosphate)-DNA + a 5'-end 5'-phospho-2'-deoxyribonucleoside-DNA + H(+). Its function is as follows. Involved in base excision repair of DNA damaged by oxidation or by mutagenic agents. Acts as a DNA glycosylase that recognizes and removes damaged bases. Has a preference for oxidized purines, such as 7,8-dihydro-8-oxoguanine (8-oxoG). Has AP (apurinic/apyrimidinic) lyase activity and introduces nicks in the DNA strand. Cleaves the DNA backbone by beta-delta elimination to generate a single-strand break at the site of the removed base with both 3'- and 5'-phosphates. The polypeptide is Formamidopyrimidine-DNA glycosylase (Thiobacillus denitrificans (strain ATCC 25259 / T1)).